Consider the following 66-residue polypeptide: Large ribosomal subunit protein bL31 (66 aa).

Residues C16, C18, C36, and C39 each coordinate Zn(2+).

Belongs to the bacterial ribosomal protein bL31 family. Type A subfamily. As to quaternary structure, part of the 50S ribosomal subunit. The cofactor is Zn(2+).

Its function is as follows. Binds the 23S rRNA. The chain is Large ribosomal subunit protein bL31 from Campylobacter lari (strain RM2100 / D67 / ATCC BAA-1060).